The sequence spans 211 residues: Ferric nitrobindin-like protein (211 aa).

Residues 21-27 (GRWRGPG) carry the GXWXGXG motif. A disordered region spans residues 104–130 (GVVQEGSDTRTEPGGAEPDPAGRRAPS).

It belongs to the nitrobindin family.

This Beutenbergia cavernae (strain ATCC BAA-8 / DSM 12333 / CCUG 43141 / JCM 11478 / NBRC 16432 / NCIMB 13614 / HKI 0122) protein is Ferric nitrobindin-like protein.